Here is a 406-residue protein sequence, read N- to C-terminus: Homocitrate synthase AksA (406 aa).

The region spanning 32–285 (IYIYDTTLRD…DLGLNLEVLP (254 aa)) is the Pyruvate carboxyltransferase domain.

It belongs to the alpha-IPM synthase/homocitrate synthase family.

The enzyme catalyses acetyl-CoA + 2-oxoglutarate + H2O = (2R)-homocitrate + CoA + H(+). The catalysed reaction is 2-oxoadipate + acetyl-CoA + H2O = (R)-dihomocitrate + CoA + H(+). It carries out the reaction 2-oxoheptanedioate + acetyl-CoA + H2O = (R)-trihomocitrate + CoA + H(+). The protein operates within organic acid metabolism; 2-oxosuberate biosynthesis. Its function is as follows. Catalyzes the condensation of alpha-ketoglutarate and acetyl-CoA to form (R)-homocitrate. Can also catalyze the condensation of alpha-ketoadipate with acetyl-CoA to form (R)-homo(2)citrate, and the condensation of alpha-ketopimelate with acetyl-CoA to form (R)-homo(3)citrate. These reactions are part of the biosynthesis pathway of coenzyme B and biotin. The protein is Homocitrate synthase AksA (aksA) of Methanocaldococcus jannaschii (strain ATCC 43067 / DSM 2661 / JAL-1 / JCM 10045 / NBRC 100440) (Methanococcus jannaschii).